Consider the following 277-residue polypeptide: Large ribosomal subunit protein uL2 (277 aa).

The segment at Gly222–Lys258 is disordered.

The protein belongs to the universal ribosomal protein uL2 family. As to quaternary structure, part of the 50S ribosomal subunit. Forms a bridge to the 30S subunit in the 70S ribosome.

Its function is as follows. One of the primary rRNA binding proteins. Required for association of the 30S and 50S subunits to form the 70S ribosome, for tRNA binding and peptide bond formation. It has been suggested to have peptidyltransferase activity; this is somewhat controversial. Makes several contacts with the 16S rRNA in the 70S ribosome. This Clostridium perfringens (strain 13 / Type A) protein is Large ribosomal subunit protein uL2.